The sequence spans 33 residues: MLFLLKSRKEGKEKVSIYSVYCFFLRKENGKDE.

This is an uncharacterized protein from Saccharomyces cerevisiae (strain ATCC 204508 / S288c) (Baker's yeast).